Here is a 141-residue protein sequence, read N- to C-terminus: Mu-like prophage FluMu protein gp36 (141 aa).

This sequence to phage Mu protein gp36.

This Haemophilus influenzae (strain ATCC 51907 / DSM 11121 / KW20 / Rd) protein is Mu-like prophage FluMu protein gp36.